The sequence spans 295 residues: MTLEEQFLSYLKNERSYSPKTVLAYQKDLAAAKKFWQENGGFPGWDQISRRDLEIYLLATGQKLASSTLSRKLSSLKSFYRLLTRRGLVKADPTVAIQLRRGKKKLPEFFYQDEVGQVIRSLNDGKPLTVRNRAIVALFYATGMRLSELTDLKIKQLDLENGMILVHGKGNKDRYVFFDQESKKYLEEYLQVARPSLLKNEPDTEAVFLNKLGRPISSRGIAKAVQQIFQKAGLTAGAHPHELRHSFATAMLNNGADLRSVQELLGHEDLSTTQIYTHVSMQHLTAEYRQHFPRK.

The 84-residue stretch at 1–84 (MTLEEQFLSY…SLKSFYRLLT (84 aa)) folds into the Core-binding (CB) domain. The Tyr recombinase domain maps to 105-289 (KLPEFFYQDE…SMQHLTAEYR (185 aa)). Active-site residues include arginine 145, lysine 169, histidine 241, arginine 244, and histidine 267. Residue tyrosine 276 is the O-(3'-phospho-DNA)-tyrosine intermediate of the active site.

The protein belongs to the 'phage' integrase family. XerC subfamily. In terms of assembly, forms a cyclic heterotetrameric complex composed of two molecules of XerC and two molecules of XerD.

It is found in the cytoplasm. Functionally, site-specific tyrosine recombinase, which acts by catalyzing the cutting and rejoining of the recombining DNA molecules. The XerC-XerD complex is essential to convert dimers of the bacterial chromosome into monomers to permit their segregation at cell division. It also contributes to the segregational stability of plasmids. This Lactobacillus leichmannii protein is Tyrosine recombinase XerC.